Here is a 179-residue protein sequence, read N- to C-terminus: Large ribosomal subunit protein uL5 (179 aa).

This sequence belongs to the universal ribosomal protein uL5 family. Part of the 50S ribosomal subunit; part of the 5S rRNA/L5/L18/L25 subcomplex. Contacts the 5S rRNA and the P site tRNA. Forms a bridge to the 30S subunit in the 70S ribosome.

Its function is as follows. This is one of the proteins that bind and probably mediate the attachment of the 5S RNA into the large ribosomal subunit, where it forms part of the central protuberance. In the 70S ribosome it contacts protein S13 of the 30S subunit (bridge B1b), connecting the 2 subunits; this bridge is implicated in subunit movement. Contacts the P site tRNA; the 5S rRNA and some of its associated proteins might help stabilize positioning of ribosome-bound tRNAs. The sequence is that of Large ribosomal subunit protein uL5 from Hamiltonella defensa subsp. Acyrthosiphon pisum (strain 5AT).